Here is a 354-residue protein sequence, read N- to C-terminus: UDP-N-acetylglucosamine--N-acetylmuramyl-(pentapeptide) pyrophosphoryl-undecaprenol N-acetylglucosamine transferase (354 aa).

UDP-N-acetyl-alpha-D-glucosamine is bound by residues 11 to 13 (TAG), Arg164, Ser194, and Gln289.

Belongs to the glycosyltransferase 28 family. MurG subfamily.

It is found in the cell membrane. It carries out the reaction di-trans,octa-cis-undecaprenyl diphospho-N-acetyl-alpha-D-muramoyl-L-alanyl-D-glutamyl-meso-2,6-diaminopimeloyl-D-alanyl-D-alanine + UDP-N-acetyl-alpha-D-glucosamine = di-trans,octa-cis-undecaprenyl diphospho-[N-acetyl-alpha-D-glucosaminyl-(1-&gt;4)]-N-acetyl-alpha-D-muramoyl-L-alanyl-D-glutamyl-meso-2,6-diaminopimeloyl-D-alanyl-D-alanine + UDP + H(+). Its pathway is cell wall biogenesis; peptidoglycan biosynthesis. In terms of biological role, cell wall formation. Catalyzes the transfer of a GlcNAc subunit on undecaprenyl-pyrophosphoryl-MurNAc-pentapeptide (lipid intermediate I) to form undecaprenyl-pyrophosphoryl-MurNAc-(pentapeptide)GlcNAc (lipid intermediate II). This is UDP-N-acetylglucosamine--N-acetylmuramyl-(pentapeptide) pyrophosphoryl-undecaprenol N-acetylglucosamine transferase from Clostridium botulinum (strain Langeland / NCTC 10281 / Type F).